Consider the following 478-residue polypeptide: Ubiquitin carboxyl-terminal hydrolase calypso (478 aa).

One can recognise a UCH catalytic domain in the interval 11–239; that stretch reads GWLELESDPG…IRFNLMAVVP (229 aa). Cys97 (nucleophile) is an active-site residue. The active-site Proton donor is His176. Residues 400–428 enclose the ULD domain; the sequence is NYDEFICTFLSMLAHQGELGDLVSQHLIT. The tract at residues 430 to 478 is positively charged C-terminal tail required for binding nucleosomes; sequence RKPNMGSVQNSGSRGVVRNYNKKTTTNGSSPKTPSSKRRRGRTKYRKRK. Over residues 432-442 the composition is skewed to polar residues; it reads PNMGSVQNSGS. The disordered stretch occupies residues 432 to 478; that stretch reads PNMGSVQNSGSRGVVRNYNKKTTTNGSSPKTPSSKRRRGRTKYRKRK. Basic residues predominate over residues 464–478; it reads SSKRRRGRTKYRKRK.

Belongs to the peptidase C12 family. BAP1 subfamily. As to quaternary structure, catalytic component of the polycomb repressive deubiquitinase (PR-DUB) complex, at least composed of caly/calypso, Asx and sba (MBD5/6 homolog). The PR-DUB complex associates with nucleosomes to mediate deubiquitination of histone H2AK118ub1 substrates; the association requires the positively charged C-terminal tail of caly, probably due to direct binding of DNA. Interacts (via ULD domain) with Asx (via DEUBAD domain); the interaction produces a stable heterodimer with a composite binding site for ubiquitin. Homodimerizes (via coiled-coil hinge-region between the UCH and ULD domains) to mediate assembly of 2 copies of the caly-Asx heterodimer into a bisymmetric tetramer; dimerization enhances PR-DUB association with nucleosomes.

The protein resides in the nucleus. It catalyses the reaction Thiol-dependent hydrolysis of ester, thioester, amide, peptide and isopeptide bonds formed by the C-terminal Gly of ubiquitin (a 76-residue protein attached to proteins as an intracellular targeting signal).. In terms of biological role, catalytic component of the polycomb repressive deubiquitinase (PR-DUB) complex, a complex that specifically mediates deubiquitination of histone H2A monoubiquitinated at 'Lys-119' (H2AK118ub1). Mediates bisymmetric organization of the PR-DUB complex and is involved in association with nucleosomes to mediate deubiquitination. Does not deubiquitinate monoubiquitinated histone H2B. Required to maintain the transcriptionally repressive state of homeotic genes throughout development. The PR-DUB complex has weak or no activity toward 'Lys-48'- and 'Lys-63'-linked polyubiquitin chains. Polycomb group (PcG) protein. This is Ubiquitin carboxyl-terminal hydrolase calypso from Aedes aegypti (Yellowfever mosquito).